Consider the following 236-residue polypeptide: Orotidine 5'-phosphate decarboxylase (236 aa).

Substrate-binding positions include Asp-14, Lys-36, 63–72 (DLKFHDIPNT), Thr-123, Arg-184, Gln-193, Gly-213, and Arg-214. Catalysis depends on Lys-65, which acts as the Proton donor.

The protein belongs to the OMP decarboxylase family. Type 1 subfamily. In terms of assembly, homodimer.

It catalyses the reaction orotidine 5'-phosphate + H(+) = UMP + CO2. The protein operates within pyrimidine metabolism; UMP biosynthesis via de novo pathway; UMP from orotate: step 2/2. Functionally, catalyzes the decarboxylation of orotidine 5'-monophosphate (OMP) to uridine 5'-monophosphate (UMP). The chain is Orotidine 5'-phosphate decarboxylase from Marinobacter nauticus (strain ATCC 700491 / DSM 11845 / VT8) (Marinobacter aquaeolei).